A 190-amino-acid polypeptide reads, in one-letter code: Probable chorismate pyruvate-lyase (190 aa).

Residues R77, L115, and E174 each coordinate substrate.

This sequence belongs to the UbiC family.

It localises to the cytoplasm. It carries out the reaction chorismate = 4-hydroxybenzoate + pyruvate. It functions in the pathway cofactor biosynthesis; ubiquinone biosynthesis. Removes the pyruvyl group from chorismate, with concomitant aromatization of the ring, to provide 4-hydroxybenzoate (4HB) for the ubiquinone pathway. The sequence is that of Probable chorismate pyruvate-lyase from Shewanella sp. (strain MR-4).